The following is a 485-amino-acid chain: Regulatory protein ViaA (485 aa).

Belongs to the ViaA family. In terms of assembly, homodimer. Interacts with RavA.

It localises to the cytoplasm. Functionally, component of the RavA-ViaA chaperone complex, which may act on the membrane to optimize the function of some of the respiratory chains. ViaA stimulates the ATPase activity of RavA. The sequence is that of Regulatory protein ViaA from Proteus mirabilis (strain HI4320).